The chain runs to 524 residues: Na(+)/H(+) antiporter NhaG (524 aa).

The next 11 helical transmembrane spans lie at 6–26 (LHHIFELGFFVVMIAAGITAI), 33–53 (PYPIALVIVGTIIGLVHIPLF), 59–79 (FITEGEVFNFVIITLFLPALL), 98–118 (VLALFGGTLISFLIVGFSSMW), 126–146 (AAFVFAALMSATDPVSVLSIF), 169–189 (LAVVLFNISAFYLMTYLDLGI), 193–213 (GLGLWEFVKVISLGLIIGGVL), 242–262 (FLLAEMAGASGVIAVVVAALI), 283–303 (FWDVAALLANSLVFLMVGLEI), 312–332 (WGLAIMAIVIVLIARSAAVYI), and 374–394 (DILVFAFSVVLFSLVVQGLTI).

Belongs to the monovalent cation:proton antiporter 1 (CPA1) transporter (TC 2.A.36) family.

Its subcellular location is the cell membrane. In terms of biological role, na(+)/H(+) antiporter that extrudes sodium in exchange for external protons. Can also transport lithium. This Bacillus atrophaeus protein is Na(+)/H(+) antiporter NhaG (nhaG).